Consider the following 662-residue polypeptide: MSDLFSFNKEKKNKLVDNNYSAKDIEVLEGLEPVRKRPGMYIGGTDSNAMHHLVSEVLDNAMDEAVAGFASIITITMHHDHSITIFDNGRGIPIDNHPKFPDKSALEVILTTLHSGGKFSNNVYHTAGGLHGVGISVVNALSKHLEIKVYKQGKLYSQSYSKGEKLTDLICEEASKRLRGTSINFTPDPEIFSEKLHFNPKKIYELARSKAYLYRGVTIEWACEVEVQSDIPKKALISFPNGLKDYLSSKITLDNLVIPGIFAGNIESKSDRIKLEWAICWQNNDSSAFVQSYCNTVPTPQGGTHEQGLKSAILRGLKAYGEMIGNKKAANLTIEDILETASVVLSIFIAEPSFQGQTKEKLVSNGVSKPVENIIKDHFDHFLSSDKALATNLLEHVISIAEFRISKKNEKNISRKNATQKLRLPGKLADCTRTSPEGTELFIVEGDSAGGSAKQARNRETQAVLPLWGKVLNVASSTLEKIVNNQAIQDLEIALACGSLKNYKKENLRYEKIIIMTDADVDGAHIASLLMTFFFLRMPKLVEEGHLYLAKPPLYRLTQSNKTYYAGDEEEKAKLMDKLLKASKAKIEVGRFKGLGEMMPAQLKETTMHPEKRSLLKVTLADFQNVDKIVDDLMGKKPEKRFQFIYEQALVKMDKIISELDI.

ATP contacts are provided by residues Tyr-20, Asn-60, Asp-87, 129-135 (GLHGVGI), and Lys-359. The 115-residue stretch at 439 to 553 (TELFIVEGDS…EGHLYLAKPP (115 aa)) folds into the Toprim domain. Mg(2+) is bound by residues Glu-445, Asp-518, and Asp-520.

Belongs to the type II topoisomerase family. ParE type 1 subfamily. As to quaternary structure, heterotetramer composed of ParC and ParE. Mg(2+) serves as cofactor. Requires Mn(2+) as cofactor. Ca(2+) is required as a cofactor.

The enzyme catalyses ATP-dependent breakage, passage and rejoining of double-stranded DNA.. Functionally, topoisomerase IV is essential for chromosome segregation. It relaxes supercoiled DNA. Performs the decatenation events required during the replication of a circular DNA molecule. This Rickettsia conorii (strain ATCC VR-613 / Malish 7) protein is DNA topoisomerase 4 subunit B.